The chain runs to 370 residues: GTPase Obg (370 aa).

Residues 1–159 (MKFIDEARIE…RMLKLELKVL (159 aa)) form the Obg domain. The tract at residues 128-147 (LHFKSSTNRAPRQKTDGKPG) is disordered. The region spanning 160-334 (ADVGLLGMPN…LCYAIYDYLS (175 aa)) is the OBG-type G domain. GTP-binding positions include 166–173 (GMPNAGKS), 191–195 (FTTLA), 213–216 (DIPG), 284–287 (NKLD), and 315–317 (SAL). Residues serine 173 and threonine 193 each coordinate Mg(2+).

This sequence belongs to the TRAFAC class OBG-HflX-like GTPase superfamily. OBG GTPase family. As to quaternary structure, monomer. Requires Mg(2+) as cofactor.

It localises to the cytoplasm. In terms of biological role, an essential GTPase which binds GTP, GDP and possibly (p)ppGpp with moderate affinity, with high nucleotide exchange rates and a fairly low GTP hydrolysis rate. Plays a role in control of the cell cycle, stress response, ribosome biogenesis and in those bacteria that undergo differentiation, in morphogenesis control. The protein is GTPase Obg of Burkholderia orbicola (strain MC0-3).